Consider the following 507-residue polypeptide: MSLWLPASGKVYLPPATPVARVQSTDEYVERTNIFYHAISDRLLTVGHPYYDVRSGDGQRIEVPKVSGNQYRAFRISLPDPNRFALADMSVYNPDKERLVWACRGIEIGRGQPLGVGTSGHPLFNKVRDTENSSNYQGTTMDDRQNTSFDPKQVQMFIIGCIPCLGEHWDKAKVCEKDANNQLGLCPPIELRNTVIEDGDMFDIGFGNINNKELSFNKSDVSLDIVDETCKYPDFLTMANDVYGDACFFFARREQCYARHYYVRGGSVGDAVPDGAVNQDHNFFLPAKSDQQQRTIANSTYYPTVSGSLVTSDAQLFNRPFWLQRAQGHNNGILWGNQIFVTVADNTRNTNFTISVSTEAAQTEEYNANNIREYLRHVEEYQISLILQLCKVPLVAEVLSQINAMNSGILEDWQLGFVPTPENAVHDIYRYIDSKATKCPDAVEPTEKEDPFAKYSFWKVDLTERLSLDLDQYPLGRKFLFQAGLQTRKRPIKTSVKTSKNAKRRRT.

This sequence belongs to the papillomaviridae L1 protein family. Self-assembles into homopentamers. The capsid has an icosahedral symmetry and consists of 72 capsomers, with each capsomer being a pentamer of L1. Interacts with the minor capsid protein L2; this interaction is necessary for viral genome encapsidation. Interacts with protein E2; this interaction enhances E2-dependent replication and transcription activation.

It localises to the virion. The protein resides in the host nucleus. Its function is as follows. Forms an icosahedral capsid with a T=7 symmetry and a 50 nm diameter. The capsid is composed of 72 pentamers linked to each other by disulfide bonds and associated with L2 proteins. Binds to heparan sulfate proteoglycans on cell surface of basal layer keratinocytes to provide initial virion attachment. This binding mediates a conformational change in the virus capsid that facilitates efficient infection. The virion enters the host cell via endocytosis. During virus trafficking, L1 protein dissociates from the viral DNA and the genomic DNA is released to the host nucleus. The virion assembly takes place within the cell nucleus. Encapsulates the genomic DNA together with protein L2. This is Major capsid protein L1 from Human papillomavirus 9.